A 555-amino-acid polypeptide reads, in one-letter code: CTP synthase (555 aa).

Residues 1–265 (MTRYIFITGG…GNRVCEKLNI (265 aa)) are amidoligase domain. CTP is bound at residue serine 13. Position 13 (serine 13) interacts with UTP. Residues 14-19 (SLGKGI) and aspartate 71 each bind ATP. Aspartate 71 and glutamate 139 together coordinate Mg(2+). CTP is bound by residues 146-148 (DIE), 186-191 (KTKPTQ), and lysine 222. Residues 186–191 (KTKPTQ) and lysine 222 each bind UTP. The Glutamine amidotransferase type-1 domain maps to 290-541 (TVAVVGKYVD…IKAGLAAKEA (252 aa)). Residue glycine 351 coordinates L-glutamine. The Nucleophile; for glutamine hydrolysis role is filled by cysteine 378. L-glutamine is bound by residues 379–382 (LGMQ), glutamate 402, and arginine 469. Residues histidine 514 and glutamate 516 contribute to the active site.

The protein belongs to the CTP synthase family. Homotetramer.

The catalysed reaction is UTP + L-glutamine + ATP + H2O = CTP + L-glutamate + ADP + phosphate + 2 H(+). It carries out the reaction L-glutamine + H2O = L-glutamate + NH4(+). The enzyme catalyses UTP + NH4(+) + ATP = CTP + ADP + phosphate + 2 H(+). The protein operates within pyrimidine metabolism; CTP biosynthesis via de novo pathway; CTP from UDP: step 2/2. Allosterically activated by GTP, when glutamine is the substrate; GTP has no effect on the reaction when ammonia is the substrate. The allosteric effector GTP functions by stabilizing the protein conformation that binds the tetrahedral intermediate(s) formed during glutamine hydrolysis. Inhibited by the product CTP, via allosteric rather than competitive inhibition. Its function is as follows. Catalyzes the ATP-dependent amination of UTP to CTP with either L-glutamine or ammonia as the source of nitrogen. Regulates intracellular CTP levels through interactions with the four ribonucleotide triphosphates. This chain is CTP synthase, found in Coxiella burnetii (strain Dugway 5J108-111).